Here is a 186-residue protein sequence, read N- to C-terminus: tRNA (cytidine(56)-2'-O)-methyltransferase (186 aa).

Residues Leu84 and 110–114 (GAEKV) each bind S-adenosyl-L-methionine.

It belongs to the aTrm56 family. As to quaternary structure, homodimer.

It is found in the cytoplasm. The enzyme catalyses cytidine(56) in tRNA + S-adenosyl-L-methionine = 2'-O-methylcytidine(56) in tRNA + S-adenosyl-L-homocysteine + H(+). In terms of biological role, specifically catalyzes the AdoMet-dependent 2'-O-ribose methylation of cytidine at position 56 in tRNAs. The polypeptide is tRNA (cytidine(56)-2'-O)-methyltransferase (Staphylothermus marinus (strain ATCC 43588 / DSM 3639 / JCM 9404 / F1)).